We begin with the raw amino-acid sequence, 94 residues long: DNA-binding protein HU (94 aa).

It belongs to the bacterial histone-like protein family.

Functionally, histone-like DNA-binding protein which is capable of wrapping DNA to stabilize it, and thus to prevent its denaturation under extreme environmental conditions. This is DNA-binding protein HU (hup) from Xylella fastidiosa (strain 9a5c).